Here is a 658-residue protein sequence, read N- to C-terminus: Probable replication factor A 73 kDa subunit (658 aa).

Disordered regions lie at residues 134 to 155 and 169 to 222; these read PEVK…RPNI and SEFQ…TERG. The segment at residues 236–326 is a DNA-binding region (OB); it reads FRIHGMVSRK…TLRNDSVVEA (91 aa). The segment at 518–539 adopts a C4-type zinc-finger fold; it reads CASEGCQKKVIESDGEYRCEKC.

It belongs to the replication factor A protein 1 family. In terms of assembly, component of the heterotrimeric canonical replication protein A complex (RPA).

It is found in the nucleus. In terms of biological role, as part of the heterotrimeric replication protein A complex (RPA/RP-A), binds and stabilizes single-stranded DNA intermediates, that form during DNA replication or upon DNA stress. It prevents their reannealing and in parallel, recruits and activates different proteins and complexes involved in DNA metabolism. Thereby, it plays an essential role both in DNA replication and the cellular response to DNA damage. The protein is Probable replication factor A 73 kDa subunit of Caenorhabditis briggsae.